A 226-amino-acid chain; its full sequence is UPF0758 protein Sca_1264 (226 aa).

Positions 102–224 (KITSPQDAAD…YLSMVEGGYF (123 aa)) constitute an MPN domain. 3 residues coordinate Zn(2+): His-173, His-175, and Asp-186. The JAMM motif signature appears at 173-186 (HNHPSGDVTPSKED).

Belongs to the UPF0758 family.

The polypeptide is UPF0758 protein Sca_1264 (Staphylococcus carnosus (strain TM300)).